The following is a 139-amino-acid chain: Holo-[acyl-carrier-protein] synthase (139 aa).

Mg(2+) is bound by residues Asp9 and Glu63.

It belongs to the P-Pant transferase superfamily. AcpS family. Mg(2+) is required as a cofactor.

The protein localises to the cytoplasm. It catalyses the reaction apo-[ACP] + CoA = holo-[ACP] + adenosine 3',5'-bisphosphate + H(+). In terms of biological role, transfers the 4'-phosphopantetheine moiety from coenzyme A to a Ser of acyl-carrier-protein. The chain is Holo-[acyl-carrier-protein] synthase from Wigglesworthia glossinidia brevipalpis.